Reading from the N-terminus, the 250-residue chain is DNA repair protein RecO (250 aa).

It belongs to the RecO family.

Functionally, involved in DNA repair and RecF pathway recombination. This Staphylococcus aureus (strain MRSA252) protein is DNA repair protein RecO.